The sequence spans 45 residues: Large ribosomal subunit protein bL34 (45 aa).

The protein belongs to the bacterial ribosomal protein bL34 family.

This chain is Large ribosomal subunit protein bL34, found in Beutenbergia cavernae (strain ATCC BAA-8 / DSM 12333 / CCUG 43141 / JCM 11478 / NBRC 16432 / NCIMB 13614 / HKI 0122).